The sequence spans 319 residues: Nucleotide-binding protein Mvan_2698 (319 aa).

The segment covering 1 to 12 (MTEQGMHQELRE) has biased composition (basic and acidic residues). Residues 1-26 (MTEQGMHQELREGAGTAGDEGGLEAA) are disordered. 43–50 (GLSGAGRG) provides a ligand contact to ATP. 94-97 (DVRS) is a GTP binding site.

This sequence belongs to the RapZ-like family.

Displays ATPase and GTPase activities. This chain is Nucleotide-binding protein Mvan_2698, found in Mycolicibacterium vanbaalenii (strain DSM 7251 / JCM 13017 / BCRC 16820 / KCTC 9966 / NRRL B-24157 / PYR-1) (Mycobacterium vanbaalenii).